The primary structure comprises 792 residues: Xaa-Pro dipeptidyl-peptidase (792 aa).

Active-site charge relay system residues include serine 363, aspartate 482, and histidine 513.

The protein belongs to the peptidase S15 family. As to quaternary structure, homodimer.

The protein localises to the cytoplasm. It carries out the reaction Hydrolyzes Xaa-Pro-|- bonds to release unblocked, N-terminal dipeptides from substrates including Ala-Pro-|-p-nitroanilide and (sequentially) Tyr-Pro-|-Phe-Pro-|-Gly-Pro-|-Ile.. In terms of biological role, removes N-terminal dipeptides sequentially from polypeptides having unsubstituted N-termini provided that the penultimate residue is proline. This is Xaa-Pro dipeptidyl-peptidase from Lactobacillus delbrueckii subsp. bulgaricus (strain ATCC 11842 / DSM 20081 / BCRC 10696 / JCM 1002 / NBRC 13953 / NCIMB 11778 / NCTC 12712 / WDCM 00102 / Lb 14).